The sequence spans 209 residues: Protein-L-isoaspartate O-methyltransferase (209 aa).

Residue serine 55 is part of the active site.

This sequence belongs to the methyltransferase superfamily. L-isoaspartyl/D-aspartyl protein methyltransferase family.

It localises to the cytoplasm. The enzyme catalyses [protein]-L-isoaspartate + S-adenosyl-L-methionine = [protein]-L-isoaspartate alpha-methyl ester + S-adenosyl-L-homocysteine. Catalyzes the methyl esterification of L-isoaspartyl residues in peptides and proteins that result from spontaneous decomposition of normal L-aspartyl and L-asparaginyl residues. It plays a role in the repair and/or degradation of damaged proteins. The sequence is that of Protein-L-isoaspartate O-methyltransferase from Anaeromyxobacter dehalogenans (strain 2CP-1 / ATCC BAA-258).